Here is an 838-residue protein sequence, read N- to C-terminus: E3 ubiquitin-protein ligase RNF19A (838 aa).

Positions 41-61 (DRDLQSSASSVSLPSVKKAPK) are disordered. A compositionally biased stretch (low complexity) spans 46 to 57 (SSASSVSLPSVK). Positions 128 to 351 (DFIECPLCLL…LSPSGCTFWG (224 aa)) are TRIAD supradomain. Residues Cys132, Cys135, Cys150, His152, Cys155, Cys158, Cys176, Cys179, Cys219, Cys224, Cys241, Cys246, Cys251, Cys254, His259, Cys264, Cys301, and Cys304 each contribute to the Zn(2+) site. The segment at 132–179 (CPLCLLRHSKDRFPDIMTCHHRSCVDCLRQYLRIEISESRVNISCPEC) adopts an RING-type 1 zinc-finger fold. The IBR-type zinc-finger motif lies at 199-264 (EKYEEFMLRR…KQIWHPNQTC (66 aa)). An RING-type 2; atypical zinc finger spans residues 301 to 332 (CPRCAAYIIKMNDGSCNHMTCAVCGCEFCWLC). Cys316 is an active-site residue. Positions 321, 324, 329, 332, 340, and 347 each coordinate Zn(2+). Transmembrane regions (helical) follow at residues 368-388 (LVGAPVGIALIAGIAIPAMII) and 424-444 (VIVSPVVAAVTVGIGVPIMLA). Disordered regions lie at residues 622–685 (SKPS…GNMK) and 700–721 (QQSTNSSEFEAPSLSDSMPSVA). The segment covering 630-662 (NSGSSSVDDGSATRSHAGGSSSGLPEGKSSATK) has biased composition (polar residues). Residue Ser631 is modified to Phosphoserine. Positions 660–838 (ATKWSKEATA…ELKVAIQTEI (179 aa)) are interaction with CASR. The span at 671-683 (KKSKSGKLRKKGN) shows a compositional bias: basic residues. The span at 700–717 (QQSTNSSEFEAPSLSDSM) shows a compositional bias: polar residues.

The protein belongs to the RBR family. RNF19 subfamily. In terms of assembly, interacts with UBE2L3 and UBE2L6. Interacts with transcription factor Sp1. Interacts with VCP, CASR, SNCAIP and with some SOD1 variants which cause amyotrophic lateral sclerosis, but not with wild-type SOD1. As to expression, widely expressed, with highest levels in heart. Ubiquitously expressed in the central nervous system.

The protein resides in the membrane. It is found in the cytoplasm. Its subcellular location is the cytoskeleton. It localises to the microtubule organizing center. The protein localises to the centrosome. The catalysed reaction is [E2 ubiquitin-conjugating enzyme]-S-ubiquitinyl-L-cysteine + [acceptor protein]-L-lysine = [E2 ubiquitin-conjugating enzyme]-L-cysteine + [acceptor protein]-N(6)-ubiquitinyl-L-lysine.. The protein operates within protein modification; protein ubiquitination. E3 ubiquitin-protein ligase which accepts ubiquitin from E2 ubiquitin-conjugating enzymes UBE2L3 and UBE2L6 in the form of a thioester and then directly transfers the ubiquitin to targeted substrates, such as SNCAIP or CASR. Specifically ubiquitinates pathogenic SOD1 variants, which leads to their proteasomal degradation and to neuronal protection. The chain is E3 ubiquitin-protein ligase RNF19A (RNF19A) from Homo sapiens (Human).